We begin with the raw amino-acid sequence, 312 residues long: Glyoxylate/hydroxypyruvate reductase A (312 aa).

Residue Arg-227 is part of the active site. The Proton donor role is filled by His-275.

Belongs to the D-isomer specific 2-hydroxyacid dehydrogenase family. GhrA subfamily.

Its subcellular location is the cytoplasm. It catalyses the reaction glycolate + NADP(+) = glyoxylate + NADPH + H(+). The enzyme catalyses (R)-glycerate + NAD(+) = 3-hydroxypyruvate + NADH + H(+). It carries out the reaction (R)-glycerate + NADP(+) = 3-hydroxypyruvate + NADPH + H(+). In terms of biological role, catalyzes the NADPH-dependent reduction of glyoxylate and hydroxypyruvate into glycolate and glycerate, respectively. This is Glyoxylate/hydroxypyruvate reductase A from Klebsiella pneumoniae subsp. pneumoniae (strain ATCC 700721 / MGH 78578).